A 154-amino-acid chain; its full sequence is Pro-corazonin (154 aa).

An N-terminal signal peptide occupies residues 1–19 (MLRLLLLPLFLFTLSMCMG). Gln-20 is subject to Pyrrolidone carboxylic acid. Residue Asn-30 is modified to Asparagine amide. Positions 70 to 154 (LERCLSQLQR…SAEPNVFGKH (85 aa)) are excised as a propeptide.

The protein belongs to the corazonin family. As to expression, expression is restricted to 24 neurons in the larval CNS (8 in the brain and 16 in the ventral nerve cord) and 12-16 neurons in the pars lateralis of the adult brain.

It is found in the secreted. Cardioactive peptide. Corazonin is probably involved in the physiological regulation of the heart beat. Clock (Clk) and cycle (cyc) proteins negatively regulate Crz transcription in a cell-specific manner. The protein is Pro-corazonin (Crz) of Drosophila simulans (Fruit fly).